The chain runs to 263 residues: Post-GPI attachment to proteins factor 2 (263 aa).

The next 6 membrane-spanning stretches (helical) occupy residues 16–36, 69–89, 109–129, 143–163, 180–200, and 208–228; these read FVFC…LLSL, YIWR…AVAF, FLCN…LALT, CFGG…WLFS, YKIL…YLYW, and PGIY…NIFF.

Belongs to the PGAP2 family.

Its subcellular location is the golgi apparatus membrane. It localises to the endoplasmic reticulum membrane. In terms of biological role, involved in the lipid remodeling steps of GPI-anchor maturation. Required for stable expression of GPI-anchored proteins at the cell surface. This chain is Post-GPI attachment to proteins factor 2, found in Caenorhabditis briggsae.